A 152-amino-acid polypeptide reads, in one-letter code: Deoxyuridine 5'-triphosphate nucleotidohydrolase (152 aa).

Residues 71–73 (RSG), N84, 88–90 (LID), and M98 contribute to the substrate site.

Belongs to the dUTPase family. Requires Mg(2+) as cofactor.

The catalysed reaction is dUTP + H2O = dUMP + diphosphate + H(+). The protein operates within pyrimidine metabolism; dUMP biosynthesis; dUMP from dCTP (dUTP route): step 2/2. In terms of biological role, this enzyme is involved in nucleotide metabolism: it produces dUMP, the immediate precursor of thymidine nucleotides and it decreases the intracellular concentration of dUTP so that uracil cannot be incorporated into DNA. This is Deoxyuridine 5'-triphosphate nucleotidohydrolase from Shewanella halifaxensis (strain HAW-EB4).